Consider the following 146-residue polypeptide: Ribonuclease H (146 aa).

One can recognise an RNase H type-1 domain in the interval 1-143; sequence MEKTITIYTD…CDELARLAIK (143 aa). Mg(2+) is bound by residues Asp-10, Glu-48, Asp-70, and Asp-135.

The protein belongs to the RNase H family. Monomer. Requires Mg(2+) as cofactor.

The protein resides in the cytoplasm. The catalysed reaction is Endonucleolytic cleavage to 5'-phosphomonoester.. Endonuclease that specifically degrades the RNA of RNA-DNA hybrids. The polypeptide is Ribonuclease H (Chlorobaculum parvum (strain DSM 263 / NCIMB 8327) (Chlorobium vibrioforme subsp. thiosulfatophilum)).